The chain runs to 374 residues: 2-aminoethylphosphonate--pyruvate transaminase 1 (374 aa).

At Lys195 the chain carries N6-(pyridoxal phosphate)lysine.

This sequence belongs to the class-V pyridoxal-phosphate-dependent aminotransferase family. PhnW subfamily. Homodimer. The cofactor is pyridoxal 5'-phosphate.

The enzyme catalyses (2-aminoethyl)phosphonate + pyruvate = phosphonoacetaldehyde + L-alanine. Involved in phosphonate degradation. This chain is 2-aminoethylphosphonate--pyruvate transaminase 1, found in Polaromonas sp. (strain JS666 / ATCC BAA-500).